The primary structure comprises 866 residues: Rifampicin phosphotransferase (866 aa).

An ATP-binding region spans residues 1-313; the sequence is MSSLVLGLHE…FYIVQSRPIT (313 aa). ATP is bound by residues Lys22, Arg116, Gly131, Thr135, Gln182, Glu296, Gln308, and Arg310. Residues 326-754 form a rifampicin-binding region; it reads NHVYISVGHQ…TSDGEIVTGE (429 aa). The tract at residues 410–429 is disordered; it reads IPNDKTAPNPSRGNADMPAQ. The swivel phosphohistidine stretch occupies residues 767 to 865; that stretch reads GLPVSSGVIE…VHGTEGYIEI (99 aa). The active-site Tele-phosphohistidine intermediate is the His825.

The protein belongs to the rifampicin phosphotransferase family.

The catalysed reaction is rifampicin + ATP + H2O = 21-phosphorifampicin + AMP + phosphate + 2 H(+). Its function is as follows. Catalyzes the phosphorylation of rifampicin, also known as rifampin (RIF), leading to its inactivation. In Bacillus subtilis (strain 168), this protein is Rifampicin phosphotransferase.